The chain runs to 220 residues: Large ribosomal subunit protein uL1 (220 aa).

It belongs to the universal ribosomal protein uL1 family. Part of the 50S ribosomal subunit.

In terms of biological role, binds directly to 23S rRNA. The L1 stalk is quite mobile in the ribosome, and is involved in E site tRNA release. Its function is as follows. Protein L1 is also a translational repressor protein, it controls the translation of the L11 operon by binding to its mRNA. In Ehrlichia ruminantium (strain Gardel), this protein is Large ribosomal subunit protein uL1.